The primary structure comprises 259 residues: Imidazole glycerol phosphate synthase subunit HisF (259 aa).

Active-site residues include Asp11 and Asp130.

The protein belongs to the HisA/HisF family. In terms of assembly, heterodimer of HisH and HisF.

It is found in the cytoplasm. It catalyses the reaction 5-[(5-phospho-1-deoxy-D-ribulos-1-ylimino)methylamino]-1-(5-phospho-beta-D-ribosyl)imidazole-4-carboxamide + L-glutamine = D-erythro-1-(imidazol-4-yl)glycerol 3-phosphate + 5-amino-1-(5-phospho-beta-D-ribosyl)imidazole-4-carboxamide + L-glutamate + H(+). Its pathway is amino-acid biosynthesis; L-histidine biosynthesis; L-histidine from 5-phospho-alpha-D-ribose 1-diphosphate: step 5/9. Functionally, IGPS catalyzes the conversion of PRFAR and glutamine to IGP, AICAR and glutamate. The HisF subunit catalyzes the cyclization activity that produces IGP and AICAR from PRFAR using the ammonia provided by the HisH subunit. This is Imidazole glycerol phosphate synthase subunit HisF from Chloroflexus aurantiacus (strain ATCC 29366 / DSM 635 / J-10-fl).